A 198-amino-acid chain; its full sequence is MTLPLILGSGSKYRREILDRLHLNYDVVKPDIDESAISSESPQQLVGRLAEAKARAVEKRMTYDNAIIIGSDQVAVCDGNILGKPGNRENAVRQLSSFIGKTVTFYTGLAVFNTEAQQCEVRVEPFEVEFRQLTAEEIERYVELENPFDCAGSFKSEGLGISLFSGLKGNDPNTLIGLPAIALLDMLRTHGINPLNKD.

Asp72 acts as the Proton acceptor in catalysis.

Belongs to the Maf family. YceF subfamily. A divalent metal cation is required as a cofactor.

The protein resides in the cytoplasm. The enzyme catalyses N(7)-methyl-GTP + H2O = N(7)-methyl-GMP + diphosphate + H(+). In terms of biological role, nucleoside triphosphate pyrophosphatase that hydrolyzes 7-methyl-GTP (m(7)GTP). May have a dual role in cell division arrest and in preventing the incorporation of modified nucleotides into cellular nucleic acids. The sequence is that of 7-methyl-GTP pyrophosphatase from Idiomarina loihiensis (strain ATCC BAA-735 / DSM 15497 / L2-TR).